The sequence spans 518 residues: ATP synthase subunit alpha (518 aa).

An ATP-binding site is contributed by 169–176; it reads GDRKTGKT.

The protein belongs to the ATPase alpha/beta chains family. In terms of assembly, F-type ATPases have 2 components, CF(1) - the catalytic core - and CF(0) - the membrane proton channel. CF(1) has five subunits: alpha(3), beta(3), gamma(1), delta(1), epsilon(1). CF(0) has three main subunits: a(1), b(2) and c(9-12). The alpha and beta chains form an alternating ring which encloses part of the gamma chain. CF(1) is attached to CF(0) by a central stalk formed by the gamma and epsilon chains, while a peripheral stalk is formed by the delta and b chains.

The protein localises to the cell membrane. It carries out the reaction ATP + H2O + 4 H(+)(in) = ADP + phosphate + 5 H(+)(out). In terms of biological role, produces ATP from ADP in the presence of a proton gradient across the membrane. The alpha chain is a regulatory subunit. The chain is ATP synthase subunit alpha from Enterococcus hirae (strain ATCC 9790 / DSM 20160 / JCM 8729 / LMG 6399 / NBRC 3181 / NCIMB 6459 / NCDO 1258 / NCTC 12367 / WDCM 00089 / R).